A 562-amino-acid polypeptide reads, in one-letter code: Glucose-6-phosphate isomerase (562 aa).

Glu370 (proton donor) is an active-site residue. Active-site residues include His401 and Lys526.

The protein belongs to the GPI family.

The protein localises to the cytoplasm. It catalyses the reaction alpha-D-glucose 6-phosphate = beta-D-fructose 6-phosphate. It participates in carbohydrate biosynthesis; gluconeogenesis. It functions in the pathway carbohydrate degradation; glycolysis; D-glyceraldehyde 3-phosphate and glycerone phosphate from D-glucose: step 2/4. In terms of biological role, catalyzes the reversible isomerization of glucose-6-phosphate to fructose-6-phosphate. This Deinococcus geothermalis (strain DSM 11300 / CIP 105573 / AG-3a) protein is Glucose-6-phosphate isomerase.